Here is a 271-residue protein sequence, read N- to C-terminus: 3-methyl-2-oxobutanoate hydroxymethyltransferase (271 aa).

Mg(2+) contacts are provided by Asp51 and Asp90. 3-methyl-2-oxobutanoate is bound by residues 51–52, Asp90, and Lys119; that span reads DS. A Mg(2+)-binding site is contributed by Glu121. Catalysis depends on Glu188, which acts as the Proton acceptor.

The protein belongs to the PanB family. In terms of assembly, homodecamer; pentamer of dimers. It depends on Mg(2+) as a cofactor.

The protein resides in the cytoplasm. It carries out the reaction 3-methyl-2-oxobutanoate + (6R)-5,10-methylene-5,6,7,8-tetrahydrofolate + H2O = 2-dehydropantoate + (6S)-5,6,7,8-tetrahydrofolate. Its pathway is cofactor biosynthesis; (R)-pantothenate biosynthesis; (R)-pantoate from 3-methyl-2-oxobutanoate: step 1/2. Catalyzes the reversible reaction in which hydroxymethyl group from 5,10-methylenetetrahydrofolate is transferred onto alpha-ketoisovalerate to form ketopantoate. The polypeptide is 3-methyl-2-oxobutanoate hydroxymethyltransferase (Aromatoleum aromaticum (strain DSM 19018 / LMG 30748 / EbN1) (Azoarcus sp. (strain EbN1))).